The primary structure comprises 457 residues: Phosphoglucosamine mutase (457 aa).

Serine 103 serves as the catalytic Phosphoserine intermediate. Serine 103, aspartate 244, aspartate 246, and aspartate 248 together coordinate Mg(2+). Serine 103 is subject to Phosphoserine.

This sequence belongs to the phosphohexose mutase family. Mg(2+) serves as cofactor. In terms of processing, activated by phosphorylation.

It catalyses the reaction alpha-D-glucosamine 1-phosphate = D-glucosamine 6-phosphate. Catalyzes the conversion of glucosamine-6-phosphate to glucosamine-1-phosphate. The protein is Phosphoglucosamine mutase of Granulibacter bethesdensis (strain ATCC BAA-1260 / CGDNIH1).